The primary structure comprises 148 residues: Large ribosomal subunit protein uL22c (148 aa).

It belongs to the universal ribosomal protein uL22 family. Part of the 50S ribosomal subunit.

Its subcellular location is the plastid. It is found in the chloroplast. In terms of biological role, this protein binds specifically to 23S rRNA. Functionally, the globular domain of the protein is located near the polypeptide exit tunnel on the outside of the subunit, while an extended beta-hairpin is found that lines the wall of the exit tunnel in the center of the 70S ribosome. The chain is Large ribosomal subunit protein uL22c (rpl22) from Zea mays (Maize).